Consider the following 224-residue polypeptide: TBP-related factor (224 aa).

The disordered stretch occupies residues 14 to 34 (RDNVAATSNAAANPHAALQPQ). The span at 17–34 (VAATSNAAANPHAALQPQ) shows a compositional bias: low complexity. Tandem repeats lie at residues 51 to 127 (LQNI…ARIL) and 141 to 218 (LQNI…SPIL).

This sequence belongs to the TBP family. In terms of tissue distribution, primary spermatocytes in the adult testis and in a subset of cells in the dorsal medial region of the embryonic CNS.

It localises to the nucleus. In terms of biological role, acts as a transcription factor. Binds to the TATA box promoter element which lies close to the position of transcription initiation. Its function is as follows. May be essential for embryonic development. The sequence is that of TBP-related factor (Trf) from Drosophila melanogaster (Fruit fly).